Here is a 423-residue protein sequence, read N- to C-terminus: MPELFTIPLALAGISHHAADIATLEAFRFPDEAAFLHEARERFRGVLLLQTCNRIEVLVQGDARSLEGFLQEKGRHGFTVIEGEAVPRHLLELAAGIDSLIVGEDQILGQLKQALAAAEEAGTCCSAIGLCIKKAVHAGVRVRRQTQINRGAVSVGSAAVTLAENLLGTLRDRHILVVGSGEMGVLVAQALAARGLTAIYVANRTYERAVMLADKIGGRAVNFKDLYRYIALSDVVISCTAAPHPVIRTEDIRAVMEERLWPLDTHPRHLILIDIAQPRDVEEGVRSIEGVHLFTIDDLRNVNDATMESRRSEADRARGIIDEEAEHFVRLLRRAAADETLALLYTWAESIRARERDRALARLRERDDRTAEVIDDLTHALTNKILSDVTTAIRACAECGDITTAEALMRAITRGEPCFQNEE.

Residues 51–54, Ser99, 104–106, and Gln110 contribute to the substrate site; these read TCNR and EDQ. Residue Cys52 is the Nucleophile of the active site. An NADP(+)-binding site is contributed by 179–184; the sequence is GSGEMG.

This sequence belongs to the glutamyl-tRNA reductase family. In terms of assembly, homodimer.

It catalyses the reaction (S)-4-amino-5-oxopentanoate + tRNA(Glu) + NADP(+) = L-glutamyl-tRNA(Glu) + NADPH + H(+). It participates in porphyrin-containing compound metabolism; protoporphyrin-IX biosynthesis; 5-aminolevulinate from L-glutamyl-tRNA(Glu): step 1/2. In terms of biological role, catalyzes the NADPH-dependent reduction of glutamyl-tRNA(Glu) to glutamate 1-semialdehyde (GSA). This is Glutamyl-tRNA reductase from Methanoculleus marisnigri (strain ATCC 35101 / DSM 1498 / JR1).